Consider the following 876-residue polypeptide: DNA mismatch repair protein MutS (876 aa).

626–633 (GPNMGGKS) is an ATP binding site.

The protein belongs to the DNA mismatch repair MutS family.

Functionally, this protein is involved in the repair of mismatches in DNA. It is possible that it carries out the mismatch recognition step. This protein has a weak ATPase activity. This chain is DNA mismatch repair protein MutS, found in Bordetella bronchiseptica (strain ATCC BAA-588 / NCTC 13252 / RB50) (Alcaligenes bronchisepticus).